An 88-amino-acid chain; its full sequence is Small ribosomal subunit protein bS20 (88 aa).

The interval 1–26 is disordered; the sequence is MANTAQARKRARQNTKRRQNSASQRS. The segment covering 7 to 19 has biased composition (basic residues); it reads ARKRARQNTKRRQ.

Belongs to the bacterial ribosomal protein bS20 family.

Binds directly to 16S ribosomal RNA. In Psychrobacter cryohalolentis (strain ATCC BAA-1226 / DSM 17306 / VKM B-2378 / K5), this protein is Small ribosomal subunit protein bS20.